The chain runs to 92 residues: Small ribosomal subunit protein uS19c (92 aa).

It belongs to the universal ribosomal protein uS19 family.

The protein localises to the plastid. The protein resides in the chloroplast. In terms of biological role, protein S19 forms a complex with S13 that binds strongly to the 16S ribosomal RNA. This chain is Small ribosomal subunit protein uS19c (rps19), found in Picea abies (Norway spruce).